A 331-amino-acid polypeptide reads, in one-letter code: CRISPR-associated endonuclease Cas1 (331 aa).

Residues E155, H221, and E236 each contribute to the Mn(2+) site.

The protein belongs to the CRISPR-associated endonuclease Cas1 family. As to quaternary structure, homodimer, forms a heterotetramer with a Cas2 homodimer. The cofactor is Mg(2+). Requires Mn(2+) as cofactor.

CRISPR (clustered regularly interspaced short palindromic repeat), is an adaptive immune system that provides protection against mobile genetic elements (viruses, transposable elements and conjugative plasmids). CRISPR clusters contain spacers, sequences complementary to antecedent mobile elements, and target invading nucleic acids. CRISPR clusters are transcribed and processed into CRISPR RNA (crRNA). Acts as a dsDNA endonuclease. Involved in the integration of spacer DNA into the CRISPR cassette. This Methanopyrus kandleri (strain AV19 / DSM 6324 / JCM 9639 / NBRC 100938) protein is CRISPR-associated endonuclease Cas1.